We begin with the raw amino-acid sequence, 108 residues long: DNA-binding protein HBbu (108 aa).

Belongs to the bacterial histone-like protein family.

Functionally, histone-like DNA-binding protein which is capable of wrapping DNA to stabilize it, and thus to prevent its denaturation under extreme environmental conditions. In Borrelia garinii subsp. bavariensis (strain ATCC BAA-2496 / DSM 23469 / PBi) (Borreliella bavariensis), this protein is DNA-binding protein HBbu (hbb).